The primary structure comprises 591 residues: Aspartate--tRNA ligase (591 aa).

An L-aspartate-binding site is contributed by Glu173. Positions 197 to 200 (QLFK) are aspartate. Arg219 contributes to the L-aspartate binding site. Residues 219-221 (RDE) and Gln228 each bind ATP. His446 contributes to the L-aspartate binding site. Glu482 serves as a coordination point for ATP. Arg489 serves as a coordination point for L-aspartate. 534 to 537 (GLDR) is an ATP binding site.

Belongs to the class-II aminoacyl-tRNA synthetase family. Type 1 subfamily. As to quaternary structure, homodimer.

The protein localises to the cytoplasm. It carries out the reaction tRNA(Asp) + L-aspartate + ATP = L-aspartyl-tRNA(Asp) + AMP + diphosphate. Catalyzes the attachment of L-aspartate to tRNA(Asp) in a two-step reaction: L-aspartate is first activated by ATP to form Asp-AMP and then transferred to the acceptor end of tRNA(Asp). The protein is Aspartate--tRNA ligase of Limosilactobacillus fermentum (strain NBRC 3956 / LMG 18251) (Lactobacillus fermentum).